The following is a 110-amino-acid chain: Phosphoribosyl-ATP pyrophosphatase (110 aa).

This sequence belongs to the PRA-PH family.

The protein localises to the cytoplasm. The enzyme catalyses 1-(5-phospho-beta-D-ribosyl)-ATP + H2O = 1-(5-phospho-beta-D-ribosyl)-5'-AMP + diphosphate + H(+). The protein operates within amino-acid biosynthesis; L-histidine biosynthesis; L-histidine from 5-phospho-alpha-D-ribose 1-diphosphate: step 2/9. The sequence is that of Phosphoribosyl-ATP pyrophosphatase from Pseudomonas fluorescens (strain SBW25).